Here is a 139-residue protein sequence, read N- to C-terminus: Histone H3.3 type a (139 aa).

The disordered stretch occupies residues 1-43 (MARTKQTARKSTGAKVPRKHIGSKQAHKQTPVSSSSGGVKKVH). Lys-5 bears the N6,N6,N6-trimethyllysine; by set1; alternate mark. Lys-5 carries the post-translational modification N6,N6-dimethyllysine; by set1; alternate. N6-acetyllysine; alternate is present on residues Lys-5 and Lys-10. Residue Lys-5 is modified to N6-methyllysine; by set1; alternate. Lys-10 carries the N6,N6,N6-trimethyllysine; alternate modification. Lys-10 is modified (N6,N6-dimethyllysine; alternate). Lys-10 is subject to N6-methyllysine; alternate. Ser-11 is modified (phosphoserine). N6-acetyllysine is present on Lys-15. Over residues 16–27 (VPRKHIGSKQAH) the composition is skewed to basic residues. N6-acetyllysine; alternate is present on residues Lys-19, Lys-24, Lys-28, and Lys-40. 4 positions are modified to N6-methyllysine; alternate: Lys-19, Lys-24, Lys-28, and Lys-40. N6,N6,N6-trimethyllysine; alternate is present on residues Lys-28 and Lys-40. 2 positions are modified to N6,N6-dimethyllysine; alternate: Lys-28 and Lys-40. Lys-60 carries the post-translational modification N6-acetyllysine. An N6,N6,N6-trimethyllysine; alternate modification is found at Lys-83. The residue at position 83 (Lys-83) is an N6,N6-dimethyllysine; alternate. At Lys-83 the chain carries N6-methyllysine; alternate.

This sequence belongs to the histone H3 family. The nucleosome is a histone octamer containing two molecules each of H2A, H2B, H3 and H4 assembled in one H3-H4 heterotetramer and two H2A-H2B heterodimers. The octamer wraps approximately 147 bp of DNA. In terms of processing, acetylation is generally linked to gene activation. Different methylation states of H3K4 mark distinct developmental phases. H3K4me2 is associated with euchromatic regions. H3K4me3 is a mark of active chromatin. set1 is responsible for all mono-, di- and tri-methylation of H3K4. H3K4me facilitates subsequent acetylation of H3 and H4. Methylation at H3K9 and H3K27 are linked to gene repression. Post-translationally, H3S10ph, which is linked to gene activation, prevents methylation at H3K9 but facilitates acetylation of H3 and H4.

The protein resides in the nucleus. It is found in the chromosome. Functionally, core component of nucleosome. Nucleosomes wrap and compact DNA into chromatin, limiting DNA accessibility to the cellular machineries which require DNA as a template. Histones thereby play a central role in transcription regulation, DNA repair, DNA replication and chromosomal stability. DNA accessibility is regulated via a complex set of post-translational modifications of histones, also called histone code, and nucleosome remodeling. This chain is Histone H3.3 type a (H3a), found in Dictyostelium discoideum (Social amoeba).